Reading from the N-terminus, the 289-residue chain is ATP synthase subunit a (289 aa).

Transmembrane regions (helical) follow at residues 43–63 (AFHV…LFIF), 104–124 (IAPL…IDLV), 160–180 (ISVF…GGFL), 193–213 (IVVQ…TLIA), 232–252 (IFIL…ALGV), and 259–279 (AVFH…LTIV).

This sequence belongs to the ATPase A chain family. In terms of assembly, F-type ATPases have 2 components, CF(1) - the catalytic core - and CF(0) - the membrane proton channel. CF(1) has five subunits: alpha(3), beta(3), gamma(1), delta(1), epsilon(1). CF(0) has three main subunits: a(1), b(2) and c(9-12). The alpha and beta chains form an alternating ring which encloses part of the gamma chain. CF(1) is attached to CF(0) by a central stalk formed by the gamma and epsilon chains, while a peripheral stalk is formed by the delta and b chains.

It is found in the cell inner membrane. Key component of the proton channel; it plays a direct role in the translocation of protons across the membrane. This chain is ATP synthase subunit a, found in Pseudomonas paraeruginosa (strain DSM 24068 / PA7) (Pseudomonas aeruginosa (strain PA7)).